The primary structure comprises 286 residues: Probable endonuclease 4 (286 aa).

The Zn(2+) site is built by His71, His111, Glu147, Asp181, His184, His218, Asp231, His233, and Glu263.

The protein belongs to the AP endonuclease 2 family. Requires Zn(2+) as cofactor.

The enzyme catalyses Endonucleolytic cleavage to 5'-phosphooligonucleotide end-products.. Functionally, endonuclease IV plays a role in DNA repair. It cleaves phosphodiester bonds at apurinic or apyrimidinic (AP) sites, generating a 3'-hydroxyl group and a 5'-terminal sugar phosphate. The chain is Probable endonuclease 4 from Vibrio cholerae serotype O1 (strain ATCC 39541 / Classical Ogawa 395 / O395).